The primary structure comprises 315 residues: Transaldolase (315 aa).

Lysine 128 serves as the catalytic Schiff-base intermediate with substrate.

The protein belongs to the transaldolase family. Type 1 subfamily. Homodimer.

Its subcellular location is the cytoplasm. It carries out the reaction D-sedoheptulose 7-phosphate + D-glyceraldehyde 3-phosphate = D-erythrose 4-phosphate + beta-D-fructose 6-phosphate. Its pathway is carbohydrate degradation; pentose phosphate pathway; D-glyceraldehyde 3-phosphate and beta-D-fructose 6-phosphate from D-ribose 5-phosphate and D-xylulose 5-phosphate (non-oxidative stage): step 2/3. In terms of biological role, transaldolase is important for the balance of metabolites in the pentose-phosphate pathway. The chain is Transaldolase from Opitutus terrae (strain DSM 11246 / JCM 15787 / PB90-1).